The sequence spans 106 residues: Urease subunit beta (106 aa).

It belongs to the urease beta subunit family. As to quaternary structure, heterotrimer of UreA (gamma), UreB (beta) and UreC (alpha) subunits. Three heterotrimers associate to form the active enzyme.

It localises to the cytoplasm. The enzyme catalyses urea + 2 H2O + H(+) = hydrogencarbonate + 2 NH4(+). The protein operates within nitrogen metabolism; urea degradation; CO(2) and NH(3) from urea (urease route): step 1/1. The polypeptide is Urease subunit beta (Synechococcus sp. (strain CC9605)).